The primary structure comprises 363 residues: S-adenosylmethionine:tRNA ribosyltransferase-isomerase (363 aa).

The protein belongs to the QueA family. Monomer.

Its subcellular location is the cytoplasm. The catalysed reaction is 7-aminomethyl-7-carbaguanosine(34) in tRNA + S-adenosyl-L-methionine = epoxyqueuosine(34) in tRNA + adenine + L-methionine + 2 H(+). It functions in the pathway tRNA modification; tRNA-queuosine biosynthesis. Functionally, transfers and isomerizes the ribose moiety from AdoMet to the 7-aminomethyl group of 7-deazaguanine (preQ1-tRNA) to give epoxyqueuosine (oQ-tRNA). This Haemophilus influenzae (strain 86-028NP) protein is S-adenosylmethionine:tRNA ribosyltransferase-isomerase.